A 472-amino-acid chain; its full sequence is Nuclear receptor subfamily 0 group B member 1 (472 aa).

Tandem repeats lie at residues 1–67 (MAGE…YRCC), 68–135 (FCGE…YRCC), and 136–202 (FCGK…YRSY). The tract at residues 1 to 255 (MAGEDHPWHG…RPIALKDPQV (255 aa)) is 4 X 67 AA tandem repeats. 3 consecutive short sequence motifs (LXXLL motif) follow at residues 13-17 (LYNLL), 80-84 (LYSML), and 148-152 (LYSLL). Residues 190-471 (QSTQAMAFLY…DMMLEMLCAK (282 aa)) form the NR LBD domain. A 4; truncated repeat occupies 203–255 (VCCEEQPQQSSVASDTPVRADQTPAAPQEQPRAPWWDTSSGVQRPIALKDPQV). Disordered stretches follow at residues 214 to 237 (VASD…RAPW) and 326 to 345 (RRQE…EQPQ). The short motif at 463–468 (MMLEML) is the AF-2 motif element.

The protein belongs to the nuclear hormone receptor family. NR0 subfamily. In terms of assembly, homodimer. Interacts with NR5A1, NR5A2, NR0B2 and with COPS2. Interacts with ESRRB; represses ESRRB activity at the GATA6 promoter.

The protein localises to the nucleus. Its subcellular location is the cytoplasm. In terms of biological role, nuclear receptor that lacks a DNA-binding domain and acts as a corepressor that inhibits the transcriptional activity of other nuclear receptors through heterodimeric interactions. Component of a cascade required for the development of the hypothalamic-pituitary-adrenal-gonadal axis. May also have a role in the development of the embryo and in the maintenance of embryonic stem cell pluripotency. The sequence is that of Nuclear receptor subfamily 0 group B member 1 (Nr0b1) from Rattus norvegicus (Rat).